A 507-amino-acid polypeptide reads, in one-letter code: Cytochrome P450 monooxygenase helB3 (507 aa).

An N-terminal signal peptide occupies residues Met-1–Ala-25. Asn-111, Asn-206, and Asn-339 each carry an N-linked (GlcNAc...) asparagine glycan. Cys-435 provides a ligand contact to heme.

It belongs to the cytochrome P450 family. It depends on heme as a cofactor.

It participates in mycotoxin biosynthesis. Its function is as follows. Cytochrome P450 monooxygenase; part of the gene cluster that mediates the biosynthesis of helvolic acid, an antibacterial nortriterpenoid. Protostadienol synthase helA cyclizes (3S)-oxidosqualene to (17Z)-protosta-17(20),24-dien-3-beta-ol (protostadienol). The synthesis of protostadienol is followed by several steps of monooxygenation, dehydrogenation, and acyl transfer to yield the final helvolic acid. Following the cyclization to the tetracyclic protostadienol by helA, cytochrome P450 monooxygenases helB1-mediated and helB2-mediated oxidation at C-4 and C-16, acyltransferase helD2-dependent acetylation of 16-OH, oxidation of C-21 by cytochrome P450 monooxygenase helB4, and short chain dehydrogenase helC-dependent oxidative decarboxylation yield the fusidane skeleton. This intermediate is further modified in three additional steps mediated by the cytochrome P450 monooxygenase helB3, the acyltransferase helD1, and the 3-ketosteroid 1-dehydrogenase helE to give helvolic acid. Compared with the late stages in the biosynthesis of helvolic acid, enzymes involved in the early stage modifications act in a relatively strict order. The hydroxylation of C-16 by helB1 and subsequent acetylation by helD2 should occur before the helB3-mediated oxidation of C-21. C-4 demethylation in fusidane-type antibiotics proceeds in an unusual manner though it is also achieved by oxidative decarboxylation. The methyl group at C-4 beta position is oxidized by helB1 and subsequently removed by the short chain dehydrogenase helC. The chain is Cytochrome P450 monooxygenase helB3 from Aspergillus fumigatus (strain ATCC MYA-4609 / CBS 101355 / FGSC A1100 / Af293) (Neosartorya fumigata).